The following is a 136-amino-acid chain: MIWKRKITLEALNAMGEGNMVGFLDIRFEHIGDDTLEATMPVDSRTKQPFGLLHGGASVVLAESIGSVAGYLCTEGEQKVVGLEINANHVRSAREGRVRGVCKPLHLGSRHQVWQIEIFDEKGRLCCSSRLTTAIL.

Glu-63 (nucleophile or proton acceptor) is an active-site residue. Substrate contacts are provided by residues Gly-82, 89 to 92 (HVRS), and 106 to 111 (HLGSRH).

This sequence belongs to the thioesterase PaaI family. As to quaternary structure, homotetramer. Dimer of dimers.

The enzyme catalyses 1,4-dihydroxy-2-naphthoyl-CoA + H2O = 1,4-dihydroxy-2-naphthoate + CoA + H(+). The protein operates within quinol/quinone metabolism; 1,4-dihydroxy-2-naphthoate biosynthesis; 1,4-dihydroxy-2-naphthoate from chorismate: step 7/7. It functions in the pathway quinol/quinone metabolism; menaquinone biosynthesis. Functionally, catalyzes the hydrolysis of 1,4-dihydroxy-2-naphthoyl-CoA (DHNA-CoA) to 1,4-dihydroxy-2-naphthoate (DHNA). Also shows significant activity toward a wide range of acyl-CoA thioesters, and minimal activity toward benzoyl-holoEntB. The chain is 1,4-dihydroxy-2-naphthoyl-CoA hydrolase from Escherichia coli (strain K12).